The chain runs to 63 residues: Large ribosomal subunit protein bL32 (63 aa).

The tract at residues Met1–Val27 is disordered. Residues Lys7–Ala18 are compositionally biased toward basic residues.

It belongs to the bacterial ribosomal protein bL32 family.

The chain is Large ribosomal subunit protein bL32 from Chlorobium phaeobacteroides (strain DSM 266 / SMG 266 / 2430).